The sequence spans 230 residues: Ion-translocating oxidoreductase complex subunit E (230 aa).

Topologically, residues 1 to 17 are cytoplasmic; it reads MSENRTLMLNGMWNNNP. 2 consecutive transmembrane segments (helical) span residues 18–38 and 39–59; these read ALVQ…VTNA and LGLG…VSLV. The Cytoplasmic portion of the chain corresponds to 60–68; it reads RDYVPKEVR. A helical transmembrane segment spans residues 69 to 89; that stretch reads IPVFVMIIASLVTCVQLLMNA. Topologically, residues 90-92 are periplasmic; that stretch reads YAY. A helical transmembrane segment spans residues 93-113; the sequence is GLYLSLGIFIPLIVTNCIIIG. Over 114–123 the chain is Cytoplasmic; sequence RAEAFASKND. The chain crosses the membrane as a helical span at residues 124–144; sequence VLPAALDGFWMGLGMTSVLVV. Topologically, residues 145–181 are periplasmic; it reads LGSLREIIGNGTLFDGADLLLGEWAKVLRIEVFHFDS. Residues 182-202 traverse the membrane as a helical segment; that stretch reads AFLLALLPPGAFIGVGFLIAA. Residues 203-230 are Cytoplasmic-facing; the sequence is KSVIDKQIAARQPKQQKQAIERARVTNV.

The protein belongs to the NqrDE/RnfAE family. In terms of assembly, the complex is composed of six subunits: RnfA, RnfB, RnfC, RnfD, RnfE and RnfG.

The protein localises to the cell inner membrane. Part of a membrane-bound complex that couples electron transfer with translocation of ions across the membrane. This chain is Ion-translocating oxidoreductase complex subunit E, found in Vibrio cholerae serotype O1 (strain ATCC 39541 / Classical Ogawa 395 / O395).